A 65-amino-acid polypeptide reads, in one-letter code: Small ribosomal subunit protein eS27 (65 aa).

Cys20, Cys23, Cys39, and Cys42 together coordinate Zn(2+). The segment at 20–42 (CIDCGNEQIVFSNPATTVRCLVC) adopts a C4-type zinc-finger fold.

Belongs to the eukaryotic ribosomal protein eS27 family. Part of the 30S ribosomal subunit. Zn(2+) is required as a cofactor.

The chain is Small ribosomal subunit protein eS27 from Thermococcus onnurineus (strain NA1).